Here is a 263-residue protein sequence, read N- to C-terminus: Putative hydro-lyase Pden_0321 (263 aa).

It belongs to the D-glutamate cyclase family.

This Paracoccus denitrificans (strain Pd 1222) protein is Putative hydro-lyase Pden_0321.